Consider the following 223-residue polypeptide: MEPDFWHSKWNAEQIGFHLNEVNPLLIKYWPALDLAPNSQVFVPLCGKSLDLCYLAELGHKVVGCELNQTAVEQFFAENSLPHLMTPAKESISELNRFDASDITLYQGDLFSLTPEELSGVDAFYDRAALIAWPESMRLAYVEKLIELLPPKSMGLLVTLDYPQEALKGPPFAVSNDWVMANMADYFELELLSSEDVLNENPRFVNKQVPWLTESVYQLKRRG.

S-adenosyl-L-methionine-binding residues include tryptophan 10, leucine 45, glutamate 66, and arginine 127.

This sequence belongs to the class I-like SAM-binding methyltransferase superfamily. TPMT family.

The protein resides in the cytoplasm. It catalyses the reaction S-adenosyl-L-methionine + a thiopurine = S-adenosyl-L-homocysteine + a thiopurine S-methylether.. The sequence is that of Thiopurine S-methyltransferase from Shewanella woodyi (strain ATCC 51908 / MS32).